Reading from the N-terminus, the 89-residue chain is Large ribosomal subunit protein bL27 (89 aa).

This sequence belongs to the bacterial ribosomal protein bL27 family.

This chain is Large ribosomal subunit protein bL27, found in Cytophaga hutchinsonii (strain ATCC 33406 / DSM 1761 / CIP 103989 / NBRC 15051 / NCIMB 9469 / D465).